The chain runs to 508 residues: Protein O-glucosyltransferase 3 (508 aa).

The signal sequence occupies residues 1-24 (MLGVRRALLLPPLQLALLVAAGTG). Residues 25 to 134 (ARVSAPRSLA…VAQSPYILKG (110 aa)) form a Filamin repeat. Asn-307 is a glycosylation site (N-linked (GlcNAc...) asparagine). The tract at residues 480–508 (RDGMERVPQPDDSTSVRQCHRKRPEREEL) is disordered. Positions 505 to 508 (REEL) match the Prevents secretion from ER motif.

Belongs to the KDELC family.

The protein localises to the endoplasmic reticulum lumen. It catalyses the reaction L-seryl-[EGF-like domain protein] + UDP-alpha-D-glucose = 3-O-(beta-D-glucosyl)-L-seryl-[EGF-like domain protein] + UDP + H(+). The enzyme catalyses L-seryl-[EGF-like domain protein] + UDP-alpha-D-xylose = 3-O-(beta-D-xylosyl)-L-seryl-[EGF-like domain protein] + UDP + H(+). The protein operates within protein modification; protein glycosylation. Protein glucosyltransferase that catalyzes the transfer of glucose from UDP-glucose to a serine residue within the consensus sequence peptide C-X-N-T-X-G-S-F-X-C. Can also catalyze the transfer of xylose from UDP-xylose but less efficiently. Specifically targets extracellular EGF repeats of proteins such as NOTCH1, NOTCH3, FBN1, FBN2 and LTBP1. May regulate the transport of NOTCH1 and NOTCH3 to the plasma membrane and thereby the Notch signaling pathway. The sequence is that of Protein O-glucosyltransferase 3 (Poglut3) from Rattus norvegicus (Rat).